The following is a 375-amino-acid chain: Lipid-A-disaccharide synthase (375 aa).

Belongs to the LpxB family.

The catalysed reaction is a lipid X + a UDP-2-N,3-O-bis[(3R)-3-hydroxyacyl]-alpha-D-glucosamine = a lipid A disaccharide + UDP + H(+). The protein operates within bacterial outer membrane biogenesis; LPS lipid A biosynthesis. Its function is as follows. Condensation of UDP-2,3-diacylglucosamine and 2,3-diacylglucosamine-1-phosphate to form lipid A disaccharide, a precursor of lipid A, a phosphorylated glycolipid that anchors the lipopolysaccharide to the outer membrane of the cell. This is Lipid-A-disaccharide synthase from Pseudomonas putida (strain GB-1).